A 118-amino-acid chain; its full sequence is uncharacterized protein (118 aa).

Helical transmembrane passes span 5 to 25 (AFFNLIACVLFPTPLIPSMVI) and 40 to 57 (FLTFLTNLFLYNIVQHYI).

The protein resides in the membrane. This is an uncharacterized protein from African swine fever virus (strain Badajoz 1971 Vero-adapted) (Ba71V).